Here is a 1305-residue protein sequence, read N- to C-terminus: Cyclin-G-associated kinase (1305 aa).

Serine 2 bears the N-acetylserine mark. Phosphoserine is present on residues serine 2 and serine 16. The region spanning 40–317 (LRVRRVLAEG…EVVRQLQEIA (278 aa)) is the Protein kinase domain. ATP is bound by residues 46–54 (LAEGGFAFV) and lysine 69. The Proton acceptor role is filled by aspartate 173. The Phosphatase tensin-type domain occupies 397 to 564 (SVANYAKGDL…EYVCDMVAEE (168 aa)). Serine 454 is subject to Phosphoserine. The C2 tensin-type domain maps to 570–708 (SKPMLVKSVV…FQVNLEVEVE (139 aa)). 2 disordered regions span residues 707–732 (VEPRDRPSREAPPWENTSLRGLNPKI) and 747–854 (FGKP…AAGT). A Phosphoserine modification is found at serine 768. Phosphothreonine is present on threonine 774. The span at 776–789 (SDSPQSSSTDTNHF) shows a compositional bias: polar residues. Position 781 is a phosphoserine (serine 781). The residue at position 792 (threonine 792) is a Phosphothreonine. A compositionally biased stretch (polar residues) spans 805 to 816 (LDNTSPKESQSV). Phosphoserine occurs at positions 809, 824, and 827. Positions 822-832 (DGSEVSDEEEA) are enriched in acidic residues. Residues 836–848 (SEERKPGAGEDTP) are compositionally biased toward basic and acidic residues. Phosphoserine is present on serine 938. Positions 1037 to 1139 (DTWADTATPG…WTPQAKPAPR (103 aa)) are disordered. A compositionally biased stretch (low complexity) spans 1084–1099 (DLSDLSSSLQGLPAGL). A compositionally biased stretch (polar residues) spans 1111-1132 (TQKSNSPWQANRPTAPGTSWTP). Arginine 1122 bears the Omega-N-methylarginine mark. Serine 1171 is modified (phosphoserine). The J domain maps to 1241–1305 (SRWTPVSMAD…FENQGSRPLF (65 aa)).

Belongs to the protein kinase superfamily. Ser/Thr protein kinase family.

The protein resides in the cytoplasm. It localises to the perinuclear region. It is found in the golgi apparatus. Its subcellular location is the trans-Golgi network. The protein localises to the cell junction. The protein resides in the focal adhesion. It localises to the cytoplasmic vesicle. It is found in the clathrin-coated vesicle. It catalyses the reaction L-seryl-[protein] + ATP = O-phospho-L-seryl-[protein] + ADP + H(+). It carries out the reaction L-threonyl-[protein] + ATP = O-phospho-L-threonyl-[protein] + ADP + H(+). Functionally, associates with cyclin G and CDK5. Seems to act as an auxilin homolog that is involved in the uncoating of clathrin-coated vesicles by Hsc70 in non-neuronal cells. Expression oscillates slightly during the cell cycle, peaking at G1. May play a role in clathrin-mediated endocytosis and intracellular trafficking, and in the dynamics of clathrin assembly/disassembly. The sequence is that of Cyclin-G-associated kinase from Mus musculus (Mouse).